Here is an 83-residue protein sequence, read N- to C-terminus: Hainantoxin-III 8 (83 aa).

An N-terminal signal peptide occupies residues 1–21; sequence MKASMFLALAGLVLLFVVGYA. Residues 22–48 constitute a propeptide that is removed on maturation; the sequence is SESEEKEFPRELLSKIFAVDDFTGEER. 3 cysteine pairs are disulfide-bonded: C50–C65, C57–C70, and C64–C77. Position 81 is a leucine amide (L81).

The protein belongs to the neurotoxin 10 (Hwtx-1) family. 15 (Hntx-3) subfamily. In terms of assembly, monomer. Expressed by the venom gland.

It is found in the secreted. Selective antagonist of neuronal tetrodotoxin (TTX)-sensitive voltage-gated sodium channels (IC(50)=1270 nM on Nav1.1/SCN1A, 270 nM on Nav1.2/SCN2A, 491 nM on Nav1.3/SCN3A and 232 nM on Nav1.7/SCN9A). This toxin suppress Nav1.7 current amplitude without significantly altering the activation, inactivation, and repriming kinetics. Short extreme depolarizations partially activate the toxin-bound channel, indicating voltage-dependent inhibition of this toxin. This toxin increases the deactivation of the Nav1.7 current after extreme depolarizations. The toxin-Nav1.7 complex is gradually dissociated upon prolonged strong depolarizations in a voltage-dependent manner, and the unbound toxin rebinds to Nav1.7 after a long repolarization. Moreover, analysis of chimeric channels showed that the DIIS3-S4 linker is critical for toxin binding to Nav1.7. These data are consistent with this toxin interacting with Nav1.7 site 4 and trapping the domain II voltage sensor in the closed state. The polypeptide is Hainantoxin-III 8 (Cyriopagopus hainanus (Chinese bird spider)).